A 240-amino-acid chain; its full sequence is UPF0309 protein in nagA 3'region (240 aa).

The SIS domain maps to 31–206 (IVKRLVQGGI…CAQIIEILHE (176 aa)).

The protein belongs to the UPF0309 family.

This is UPF0309 protein in nagA 3'region from Lysinibacillus sphaericus (Bacillus sphaericus).